We begin with the raw amino-acid sequence, 89 residues long: Small ribosomal subunit protein uS15 (89 aa).

It belongs to the universal ribosomal protein uS15 family. Part of the 30S ribosomal subunit. Forms a bridge to the 50S subunit in the 70S ribosome, contacting the 23S rRNA.

Its function is as follows. One of the primary rRNA binding proteins, it binds directly to 16S rRNA where it helps nucleate assembly of the platform of the 30S subunit by binding and bridging several RNA helices of the 16S rRNA. Forms an intersubunit bridge (bridge B4) with the 23S rRNA of the 50S subunit in the ribosome. The protein is Small ribosomal subunit protein uS15 of Elusimicrobium minutum (strain Pei191).